The sequence spans 402 residues: Propionate kinase (402 aa).

Residues Asn11 and Lys18 each coordinate ATP. Asn11 is a Mg(2+) binding site. Residue Arg86 coordinates substrate. Asp143 acts as the Proton donor/acceptor in catalysis. ATP is bound by residues His175, 203–207 (HLGNG), 278–280 (DLR), and 326–330 (GIGEN).

The protein belongs to the acetokinase family. TdcD subfamily. In terms of assembly, homodimer. Requires Mg(2+) as cofactor.

The enzyme catalyses propanoate + ATP = propanoyl phosphate + ADP. It participates in amino-acid degradation; L-threonine degradation via propanoate pathway; propanoate from L-threonine: step 4/4. In terms of biological role, catalyzes the conversion of propionyl phosphate and ADP to propionate and ATP. The protein is Propionate kinase of Salmonella agona (strain SL483).